The sequence spans 737 residues: Glycogen [starch] synthase, muscle (737 aa).

Phosphoserine; by AMPK and PKA is present on S8. S11 bears the Phosphoserine mark. K39 is a UDP binding site. Positions 205 and 211 each coordinate UDP-alpha-D-glucose. The alpha-D-glucose 6-phosphate site is built by H291, E292, Q294, H297, and K301. UDP is bound at residue R331. R331 contacts UDP-alpha-D-glucose. Phosphoserine is present on S412. H501 contributes to the alpha-D-glucose 6-phosphate binding site. Residues E510, W512, and G513 each contribute to the UDP-alpha-D-glucose site. Residue T515 coordinates UDP. R582 and R586 together coordinate alpha-D-glucose 6-phosphate. The disordered stretch occupies residues 634 to 737 (YRYPRPASVP…PTSSLGEERN (104 aa)). S641 carries the post-translational modification Phosphoserine; by DYRK2, GSK3-alpha, GSK3-beta and PASK. Phosphoserine; by GSK3-alpha and GSK3-beta occurs at positions 645 and 649. Residue S652 is modified to Phosphoserine. Position 653 is a phosphoserine; by GSK3-alpha and GSK3-beta (S653). S657 carries the phosphoserine; by CK2 modification. Over residues 658 to 681 (EDEEDPRNGPLEEDGERYDEDEEA) the composition is skewed to acidic residues. Positions 682–695 (AKDRRNIRAPEWPR) are enriched in basic and acidic residues. S698 carries the post-translational modification Phosphoserine. Over residues 698–714 (SCTSSTSGSKRNSVDTA) the composition is skewed to polar residues. T700 carries the post-translational modification Phosphothreonine. Residue S710 is modified to Phosphoserine. The span at 715-737 (TSSSLSTPSEPLSPTSSLGEERN) shows a compositional bias: low complexity. Position 721 is a phosphothreonine (T721). Phosphoserine is present on residues S727 and S731.

Belongs to the glycosyltransferase 3 family. Part of the GYS1-GYG1 complex, a heterooctamer composed of a tetramer of GYS1 and 2 dimers of GYG1, where each GYS1 protomer binds to one GYG1 subunit (via GYG1 C-terminus); the GYS1 tetramer may dissociate from GYG1 dimers to continue glycogen polymerization on its own. Phosphorylation at Ser-8 by AMPK inactivates the enzyme activity. Primed phosphorylation at Ser-657 (site 5) by CSNK2A1 and CSNK2A2 is required for inhibitory phosphorylation at Ser-641 (site 3a), Ser-645 (site 3b), Ser-649 (site 3c) and Ser-653 (site 4) by GSK3A an GSK3B. Phosphorylated at Ser-641 by PASK, leading to inactivation; phosphorylation by PASK is inhibited by glycogen. Phosphorylated at Ser-641 by DYRK2, leading to inactivation. Dephosphorylation at Ser-641 and Ser-645 by PP1 activates the enzyme.

It catalyses the reaction [(1-&gt;4)-alpha-D-glucosyl](n) + UDP-alpha-D-glucose = [(1-&gt;4)-alpha-D-glucosyl](n+1) + UDP + H(+). Its pathway is glycan biosynthesis; glycogen biosynthesis. Allosteric activation by glucose-6-phosphate. Phosphorylation reduces the activity towards UDP-glucose. When in the non-phosphorylated state, glycogen synthase does not require glucose-6-phosphate as an allosteric activator; when phosphorylated it does. Glycogen synthase participates in the glycogen biosynthetic process along with glycogenin and glycogen branching enzyme. Extends the primer composed of a few glucose units formed by glycogenin by adding new glucose units to it. In this context, glycogen synthase transfers the glycosyl residue from UDP-Glc to the non-reducing end of alpha-1,4-glucan. In Pongo abelii (Sumatran orangutan), this protein is Glycogen [starch] synthase, muscle (GYS1).